Here is a 424-residue protein sequence, read N- to C-terminus: Serine--tRNA ligase (424 aa).

233-235 (TAE) serves as a coordination point for L-serine. Position 264–266 (264–266 (RRE)) interacts with ATP. Glu-287 serves as a coordination point for L-serine. 351–354 (EISS) is an ATP binding site. Position 387 (Ser-387) interacts with L-serine.

Belongs to the class-II aminoacyl-tRNA synthetase family. Type-1 seryl-tRNA synthetase subfamily. Homodimer. The tRNA molecule binds across the dimer.

It is found in the cytoplasm. The enzyme catalyses tRNA(Ser) + L-serine + ATP = L-seryl-tRNA(Ser) + AMP + diphosphate + H(+). The catalysed reaction is tRNA(Sec) + L-serine + ATP = L-seryl-tRNA(Sec) + AMP + diphosphate + H(+). The protein operates within aminoacyl-tRNA biosynthesis; selenocysteinyl-tRNA(Sec) biosynthesis; L-seryl-tRNA(Sec) from L-serine and tRNA(Sec): step 1/1. In terms of biological role, catalyzes the attachment of serine to tRNA(Ser). Is also able to aminoacylate tRNA(Sec) with serine, to form the misacylated tRNA L-seryl-tRNA(Sec), which will be further converted into selenocysteinyl-tRNA(Sec). The chain is Serine--tRNA ligase from Cyanothece sp. (strain PCC 7425 / ATCC 29141).